A 368-amino-acid chain; its full sequence is tRNA-specific 2-thiouridylase MnmA (368 aa).

ATP is bound by residues 11–18 (GMSGGVDS) and methionine 37. Residues 97–99 (NPD) form an interaction with target base in tRNA region. Cysteine 102 serves as the catalytic Nucleophile. The cysteines at positions 102 and 199 are disulfide-linked. Glycine 127 is a binding site for ATP. Residues 149 to 151 (KDQ) form an interaction with tRNA region. Cysteine 199 functions as the Cysteine persulfide intermediate in the catalytic mechanism. The segment at 311–312 (RY) is interaction with tRNA.

The protein belongs to the MnmA/TRMU family. In terms of assembly, interacts with TusE.

The protein localises to the cytoplasm. The enzyme catalyses S-sulfanyl-L-cysteinyl-[protein] + uridine(34) in tRNA + AH2 + ATP = 2-thiouridine(34) in tRNA + L-cysteinyl-[protein] + A + AMP + diphosphate + H(+). In terms of biological role, catalyzes the 2-thiolation of uridine at the wobble position (U34) of tRNA(Lys), tRNA(Glu) and tRNA(Gln), leading to the formation of s(2)U34, the first step of tRNA-mnm(5)s(2)U34 synthesis. Sulfur is provided by IscS, via a sulfur-relay system. Binds ATP and its substrate tRNAs. The polypeptide is tRNA-specific 2-thiouridylase MnmA (Shigella boydii serotype 18 (strain CDC 3083-94 / BS512)).